A 545-amino-acid chain; its full sequence is ATP synthase F(1) complex subunit alpha, mitochondrial (545 aa).

Residues Gln-216, Gly-218, Lys-219, Thr-220, and Ser-221 each contribute to the ATP site. A Mg(2+)-binding site is contributed by Thr-220. Asp-304 lines the Mg(2+) pocket. ATP is bound by residues Gln-465 and Gln-467.

It belongs to the ATPase alpha/beta chains family. Homotrimer. Component of the ATP synthase complex composed at least of ATP5F1A/subunit alpha, ATP5F1B/subunit beta, ATP5MC1/subunit c (homooctomer), MT-ATP6/subunit a, MT-ATP8/subunit 8, ATP5ME/subunit e, ATP5MF/subunit f, ATP5MG/subunit g, ATP5MK/subunit k, ATP5MJ/subunit j, ATP5F1C/subunit gamma, ATP5F1D/subunit delta, ATP5F1E/subunit epsilon, ATP5PF/subunit F6, ATP5PB/subunit b, ATP5PD/subunit d, ATP5PO/subunit OSCP. ATP synthase complex consists of a soluble F(1) head domain (subunits alpha(3) and beta(3)) - the catalytic core - and a membrane F(0) domain - the membrane proton channel (subunits c, a, 8, e, f, g, k and j). These two domains are linked by a central stalk (subunits gamma, delta, and epsilon) rotating inside the F1 region and a stationary peripheral stalk (subunits F6, b, d, and OSCP).

Its subcellular location is the mitochondrion inner membrane. Its function is as follows. Subunit alpha, of the mitochondrial membrane ATP synthase complex (F(1)F(0) ATP synthase or Complex V) that produces ATP from ADP in the presence of a proton gradient across the membrane which is generated by electron transport complexes of the respiratory chain. ATP synthase complex consist of a soluble F(1) head domain - the catalytic core - and a membrane F(1) domain - the membrane proton channel. These two domains are linked by a central stalk rotating inside the F(1) region and a stationary peripheral stalk. During catalysis, ATP synthesis in the catalytic domain of F(1) is coupled via a rotary mechanism of the central stalk subunits to proton translocation. In vivo, can only synthesize ATP although its ATP hydrolase activity can be activated artificially in vitro. With the catalytic subunit beta (ATP5F1B), forms the catalytic core in the F(1) domain. Subunit alpha does not bear the catalytic high-affinity ATP-binding sites. The protein is ATP synthase F(1) complex subunit alpha, mitochondrial of Xenopus laevis (African clawed frog).